We begin with the raw amino-acid sequence, 240 residues long: ATP-dependent dethiobiotin synthetase BioD (240 aa).

15-20 (EIGKTF) is a binding site for ATP. A Mg(2+)-binding site is contributed by Thr-19. Lys-40 is an active-site residue. ATP contacts are provided by residues Asp-57, 118–121 (EGVG), and 178–179 (NR). 2 residues coordinate Mg(2+): Asp-57 and Glu-118.

This sequence belongs to the dethiobiotin synthetase family. As to quaternary structure, homodimer. Mg(2+) serves as cofactor.

The protein resides in the cytoplasm. It carries out the reaction (7R,8S)-7,8-diammoniononanoate + CO2 + ATP = (4R,5S)-dethiobiotin + ADP + phosphate + 3 H(+). The protein operates within cofactor biosynthesis; biotin biosynthesis; biotin from 7,8-diaminononanoate: step 1/2. Functionally, catalyzes a mechanistically unusual reaction, the ATP-dependent insertion of CO2 between the N7 and N8 nitrogen atoms of 7,8-diaminopelargonic acid (DAPA, also called 7,8-diammoniononanoate) to form a ureido ring. The chain is ATP-dependent dethiobiotin synthetase BioD from Burkholderia thailandensis (strain ATCC 700388 / DSM 13276 / CCUG 48851 / CIP 106301 / E264).